A 741-amino-acid chain; its full sequence is Isocitrate dehydrogenase [NADP] (741 aa).

Residues N85 and S87 each coordinate NADP(+). D-threo-isocitrate contacts are provided by S132, N135, R139, R145, and K255. N135 contributes to the NADP(+) binding site. Mn(2+) is bound at residue D350. Residues Y420 and R547 each contribute to the D-threo-isocitrate site. Mn(2+) is bound at residue D548. 5 residues coordinate NADP(+): S585, H589, R600, D602, and R649.

Belongs to the monomeric-type IDH family. Monomer. Mg(2+) serves as cofactor. Mn(2+) is required as a cofactor.

The protein localises to the cytoplasm. The enzyme catalyses D-threo-isocitrate + NADP(+) = 2-oxoglutarate + CO2 + NADPH. With respect to regulation, activity is inhibited in the presence of Ca(2+). In terms of biological role, catalyzes the oxidative decarboxylation of isocitrate to 2-oxoglutarate and carbon dioxide with the concomitant reduction of NADP(+). The protein is Isocitrate dehydrogenase [NADP] of Azotobacter vinelandii.